A 105-amino-acid chain; its full sequence is Putative membrane protein insertion efficiency factor (105 aa).

Residues 76–105 (GHPGGVDPVPPGPHETPRKTSTHDDEPPSR) are disordered. Residues 90 to 105 (ETPRKTSTHDDEPPSR) show a composition bias toward basic and acidic residues.

It belongs to the UPF0161 family.

It is found in the cell inner membrane. Its function is as follows. Could be involved in insertion of integral membrane proteins into the membrane. This chain is Putative membrane protein insertion efficiency factor, found in Chromohalobacter salexigens (strain ATCC BAA-138 / DSM 3043 / CIP 106854 / NCIMB 13768 / 1H11).